Here is a 395-residue protein sequence, read N- to C-terminus: uncharacterized protein (395 aa).

Transmembrane regions (helical) follow at residues 12-34 (LLAS…TIYL), 44-66 (LIGY…FGIL), 75-94 (YMLL…TLVN), 99-121 (VVLF…KAWF), 134-156 (FSIN…TLLV), 160-182 (INLP…QIWV), 208-230 (LLWF…SCIS), 245-264 (VVAV…QYSV), 271-293 (ANIR…GFIF), 298-320 (LLLW…PGEY), 341-360 (LGWL…LTSL), and 364-381 (SLFV…VLML).

Belongs to the major facilitator superfamily.

It localises to the cell inner membrane. Functionally, a transporter able to export peptides. When overexpressed, allows cells deleted for multiple peptidases (pepA, pepB, pepD and pepN) to grow in the presence of dipeptides Ala-Gln or Gly-Tyr which otherwise inhibit growth. Cells overexpressing this protein have decreased intracellular levels of Ala-Gln dipeptide, and in a system that produces the Ala-Gln dipeptide overproduction of this protein increases export of the dipeptide. This is an uncharacterized protein from Escherichia coli (strain K12).